The following is a 124-amino-acid chain: Ribonuclease pancreatic (124 aa).

Substrate-binding residues include Lys-7 and Arg-10. The active-site Proton acceptor is His-12. 4 disulfides stabilise this stretch: Cys-26-Cys-84, Cys-40-Cys-95, Cys-58-Cys-110, and Cys-65-Cys-72. Asn-34 is a glycosylation site (N-linked (GlcNAc...) asparagine; partial). Residues 41–45 (KPVBT), Lys-66, and Arg-85 each bind substrate. Residue His-119 is the Proton donor of the active site.

The protein belongs to the pancreatic ribonuclease family. In terms of assembly, monomer. Interacts with and forms tight 1:1 complexes with RNH1. Dimerization of two such complexes may occur. Interaction with RNH1 inhibits this protein. Pancreas.

Its subcellular location is the secreted. It catalyses the reaction an [RNA] containing cytidine + H2O = an [RNA]-3'-cytidine-3'-phosphate + a 5'-hydroxy-ribonucleotide-3'-[RNA].. The catalysed reaction is an [RNA] containing uridine + H2O = an [RNA]-3'-uridine-3'-phosphate + a 5'-hydroxy-ribonucleotide-3'-[RNA].. Endonuclease that catalyzes the cleavage of RNA on the 3' side of pyrimidine nucleotides. Acts on single-stranded and double-stranded RNA. The protein is Ribonuclease pancreatic (RNASE1) of Damaliscus korrigum (Topi).